The sequence spans 72 residues: Translation initiation factor IF-1 (72 aa).

One can recognise an S1-like domain in the interval 1-72; sequence MPKEEVLEFP…TKGRITYRFK (72 aa).

Belongs to the IF-1 family. Component of the 30S ribosomal translation pre-initiation complex which assembles on the 30S ribosome in the order IF-2 and IF-3, IF-1 and N-formylmethionyl-tRNA(fMet); mRNA recruitment can occur at any time during PIC assembly.

Its subcellular location is the cytoplasm. Functionally, one of the essential components for the initiation of protein synthesis. Stabilizes the binding of IF-2 and IF-3 on the 30S subunit to which N-formylmethionyl-tRNA(fMet) subsequently binds. Helps modulate mRNA selection, yielding the 30S pre-initiation complex (PIC). Upon addition of the 50S ribosomal subunit IF-1, IF-2 and IF-3 are released leaving the mature 70S translation initiation complex. The protein is Translation initiation factor IF-1 of Chelativorans sp. (strain BNC1).